Consider the following 332-residue polypeptide: PTS-dependent dihydroxyacetone kinase, dihydroxyacetone-binding subunit DhaK (332 aa).

The region spanning 9 to 331 (QPQDVVSEML…LNEDVKTISW (323 aa)) is the DhaK domain. Dihydroxyacetone is bound by residues 55-58 (GSGH), lysine 106, and aspartate 111. The active-site Proton acceptor is histidine 58. The active-site Tele-hemiaminal-histidine intermediate is histidine 220.

As to quaternary structure, homodimer. The dihydroxyacetone kinase complex is composed of a homodimer of DhaM, a homodimer of DhaK and the subunit DhaL.

The catalysed reaction is dihydroxyacetone + phosphoenolpyruvate = dihydroxyacetone phosphate + pyruvate. It functions in the pathway polyol metabolism; glycerol degradation. Its function is as follows. Dihydroxyacetone binding subunit of the dihydroxyacetone kinase, which is responsible the phosphoenolpyruvate (PEP)-dependent phosphorylation of dihydroxyacetone via a phosphoryl group transfer from DhaL-ATP. The polypeptide is PTS-dependent dihydroxyacetone kinase, dihydroxyacetone-binding subunit DhaK (Lactococcus lactis subsp. lactis (strain IL1403) (Streptococcus lactis)).